Consider the following 240-residue polypeptide: Sulfite dehydrogenase subunit B (240 aa).

3 4Fe-4S ferredoxin-type domains span residues 4–34, 64–95, and 97–126; these read LALV…WAGP, TETV…KRPD, and GVVL…LDAQ. [4Fe-4S] cluster is bound by residues cysteine 13, cysteine 16, cysteine 19, cysteine 23, cysteine 73, cysteine 76, cysteine 81, cysteine 85, cysteine 106, cysteine 109, cysteine 112, and cysteine 116.

Forms a heterotrimeric membrane-bound complex composed of a catalytic heterodimer (SoeAB) and a membrane anchor protein (SoeC). Requires [4Fe-4S] cluster as cofactor.

The protein resides in the cell inner membrane. Functionally, part of the SoeABC complex that catalyzes the oxidation of sulfite to sulfate. SoeB is probably the electron transfer subunit. The polypeptide is Sulfite dehydrogenase subunit B (Allochromatium vinosum (strain ATCC 17899 / DSM 180 / NBRC 103801 / NCIMB 10441 / D) (Chromatium vinosum)).